Consider the following 224-residue polypeptide: Endonuclease NucS (224 aa).

The protein belongs to the NucS endonuclease family.

It localises to the cytoplasm. Cleaves both 3' and 5' ssDNA extremities of branched DNA structures. This chain is Endonuclease NucS, found in Rhodococcus erythropolis (strain PR4 / NBRC 100887).